Consider the following 465-residue polypeptide: Lactaldehyde dehydrogenase (465 aa).

220-225 (GSVEVG) contributes to the NAD(+) binding site. Residues Glu240 and Cys274 contribute to the active site.

It belongs to the aldehyde dehydrogenase family. Homotetramer.

It carries out the reaction (S)-lactaldehyde + NAD(+) + H2O = (S)-lactate + NADH + 2 H(+). It functions in the pathway cofactor biosynthesis; coenzyme F420 biosynthesis. Its function is as follows. Involved in F420 biosynthesis through the oxidation of lactaldehyde to lactate. The chain is Lactaldehyde dehydrogenase from Methanococcus vannielii (strain ATCC 35089 / DSM 1224 / JCM 13029 / OCM 148 / SB).